A 318-amino-acid polypeptide reads, in one-letter code: Methionyl-tRNA formyltransferase (318 aa).

Position 112–115 (112–115) interacts with (6S)-5,6,7,8-tetrahydrofolate; it reads SILP.

Belongs to the Fmt family.

The catalysed reaction is L-methionyl-tRNA(fMet) + (6R)-10-formyltetrahydrofolate = N-formyl-L-methionyl-tRNA(fMet) + (6S)-5,6,7,8-tetrahydrofolate + H(+). In terms of biological role, attaches a formyl group to the free amino group of methionyl-tRNA(fMet). The formyl group appears to play a dual role in the initiator identity of N-formylmethionyl-tRNA by promoting its recognition by IF2 and preventing the misappropriation of this tRNA by the elongation apparatus. This chain is Methionyl-tRNA formyltransferase, found in Haemophilus influenzae (strain PittGG).